The sequence spans 275 residues: Acetyl-coenzyme A carboxylase carboxyl transferase subunit beta (275 aa).

The CoA carboxyltransferase N-terminal domain maps to 21-275; sequence GLWIKCQCGA…IKIIGMHQAG (255 aa). Zn(2+) is bound by residues Cys26, Cys28, Cys44, and Cys47. A C4-type zinc finger spans residues 26–47; it reads CQCGAILFAKDLERNLKVCQKC.

The protein belongs to the AccD/PCCB family. In terms of assembly, acetyl-CoA carboxylase is a heterohexamer composed of biotin carboxyl carrier protein (AccB), biotin carboxylase (AccC) and two subunits each of ACCase subunit alpha (AccA) and ACCase subunit beta (AccD). Requires Zn(2+) as cofactor.

The protein localises to the cytoplasm. It carries out the reaction N(6)-carboxybiotinyl-L-lysyl-[protein] + acetyl-CoA = N(6)-biotinyl-L-lysyl-[protein] + malonyl-CoA. It functions in the pathway lipid metabolism; malonyl-CoA biosynthesis; malonyl-CoA from acetyl-CoA: step 1/1. In terms of biological role, component of the acetyl coenzyme A carboxylase (ACC) complex. Biotin carboxylase (BC) catalyzes the carboxylation of biotin on its carrier protein (BCCP) and then the CO(2) group is transferred by the transcarboxylase to acetyl-CoA to form malonyl-CoA. This chain is Acetyl-coenzyme A carboxylase carboxyl transferase subunit beta, found in Desulforudis audaxviator (strain MP104C).